The primary structure comprises 400 residues: Acetyl-CoA decarbonylase/synthase complex subunit delta (400 aa).

It belongs to the CdhD family. As to quaternary structure, heterodimer of delta and gamma chains. The ACDS complex is made up of alpha, epsilon, beta, gamma and delta chains with a probable stoichiometry of (alpha(2)epsilon(2))(4)-beta(8)-(gamma(1)delta(1))(8).

Its function is as follows. Part of a complex that catalyzes the reversible cleavage of acetyl-CoA, allowing autotrophic growth from CO(2). Probably maintains the overall quaternary structure of the ACDS complex. The sequence is that of Acetyl-CoA decarbonylase/synthase complex subunit delta from Methanopyrus kandleri (strain AV19 / DSM 6324 / JCM 9639 / NBRC 100938).